The following is a 439-amino-acid chain: Proline--tRNA ligase (439 aa).

It belongs to the class-II aminoacyl-tRNA synthetase family. ProS type 2 subfamily. Homodimer.

The protein localises to the cytoplasm. The catalysed reaction is tRNA(Pro) + L-proline + ATP = L-prolyl-tRNA(Pro) + AMP + diphosphate. Its function is as follows. Catalyzes the attachment of proline to tRNA(Pro) in a two-step reaction: proline is first activated by ATP to form Pro-AMP and then transferred to the acceptor end of tRNA(Pro). The chain is Proline--tRNA ligase from Beijerinckia indica subsp. indica (strain ATCC 9039 / DSM 1715 / NCIMB 8712).